The primary structure comprises 402 residues: Type II NADH:quinone oxidoreductase (402 aa).

FAD is bound by residues 12 to 16, 39 to 40, and Val83; these read GAGYA and NK. Residue Glu172 is part of the active site. FAD-binding positions include Asp302, 319–320, and Lys379; that span reads AQ.

This sequence belongs to the NADH dehydrogenase family. Requires FAD as cofactor.

Its subcellular location is the cell membrane. The enzyme catalyses a quinone + NADH + H(+) = a quinol + NAD(+). In terms of biological role, alternative, nonproton pumping NADH:quinone oxidoreductase that delivers electrons to the respiratory chain by oxidation of NADH and reduction of quinones, and contributes to the regeneration of NAD(+). The chain is Type II NADH:quinone oxidoreductase from Staphylococcus epidermidis (strain ATCC 35984 / DSM 28319 / BCRC 17069 / CCUG 31568 / BM 3577 / RP62A).